A 448-amino-acid chain; its full sequence is UPF0210 protein Pisl_0759 (448 aa).

Belongs to the UPF0210 family.

In Pyrobaculum islandicum (strain DSM 4184 / JCM 9189 / GEO3), this protein is UPF0210 protein Pisl_0759.